Consider the following 122-residue polypeptide: Large ribosomal subunit protein bL12 (122 aa).

Belongs to the bacterial ribosomal protein bL12 family. As to quaternary structure, homodimer. Part of the ribosomal stalk of the 50S ribosomal subunit. Forms a multimeric L10(L12)X complex, where L10 forms an elongated spine to which 2 to 4 L12 dimers bind in a sequential fashion. Binds GTP-bound translation factors.

Forms part of the ribosomal stalk which helps the ribosome interact with GTP-bound translation factors. Is thus essential for accurate translation. This is Large ribosomal subunit protein bL12 from Clostridium botulinum (strain 657 / Type Ba4).